The primary structure comprises 211 residues: MLSHVEMAPAAGGFKLFGKVIMQCGVSEGTQDKAQGFVVAREKVEPEEEEEEEQRVPAAATSGQRASIKREAADRDEEQRQGGGDAAGQPTQRRLQDSAEARAAAAAPLPCPRCRSRDTKFCYFNNYNVNQPRHFCKACHRYWTAGGALRNVPVGAGRRKNRPLGPLAVAHHNHHHRAAAGFVLGFPNPSSPTSPSPVYTDRWPVTPDRPF.

The tract at residues 37–101 is disordered; that stretch reads FVVAREKVEP…QRRLQDSAEA (65 aa). Residues 68–80 show a composition bias toward basic and acidic residues; sequence IKREAADRDEEQR. A Dof-type zinc finger spans residues 109–163; that stretch reads LPCPRCRSRDTKFCYFNNYNVNQPRHFCKACHRYWTAGGALRNVPVGAGRRKNRP. Residues C111, C114, C136, and C139 each contribute to the Zn(2+) site. A disordered region spans residues 191–211; the sequence is SPTSPSPVYTDRWPVTPDRPF.

It localises to the nucleus. Its function is as follows. Transcription factor that may transactivate seed storage protein genes in developing seeds. The sequence is that of Dof zinc finger protein 5 from Oryza sativa subsp. japonica (Rice).